Here is a 124-residue protein sequence, read N- to C-terminus: V-type proton ATPase subunit F (124 aa).

It belongs to the V-ATPase F subunit family. As to quaternary structure, V-ATPase is a heteromultimeric enzyme composed of a peripheral catalytic V1 complex (components A to H) attached to an integral membrane V0 proton pore complex (components: a, c, c', c'', d, e, f and VOA1).

Its subcellular location is the vacuole membrane. Functionally, subunit of the V1 complex of vacuolar(H+)-ATPase (V-ATPase), a multisubunit enzyme composed of a peripheral complex (V1) that hydrolyzes ATP and a membrane integral complex (V0) that translocates protons. V-ATPase is responsible for acidifying and maintaining the pH of intracellular compartments. In Neosartorya fischeri (strain ATCC 1020 / DSM 3700 / CBS 544.65 / FGSC A1164 / JCM 1740 / NRRL 181 / WB 181) (Aspergillus fischerianus), this protein is V-type proton ATPase subunit F (vma7).